The primary structure comprises 207 residues: MKSERVNYPVKLLNFILSIMNSYLFVLIVSIGFAESSSPKSSTSCSLMTSCAVEKCLDRGMVGRIITESSRDEVFGNLVEKFDMVCIAAKCGNECSQCKHCHYALEQMSALAQGEKTSGLCPKLETCVFNCLTEDVSKVLSCVATRCNVHCYDGDCPSCKMISRRIFSNICKQHSMTTQPQIKYEGTCPNLFMELADDYVAMKKKKL.

The chain crosses the membrane as a helical span at residues 13 to 33 (LNFILSIMNSYLFVLIVSIGF).

Its subcellular location is the membrane. Acts downstream of daf-16/foxo to suppress tumors induced by disruption of gld-1. Potentially a direct target of daf-15/foxo. The chain is Protein dct-5 (dct-5) from Caenorhabditis elegans.